A 431-amino-acid chain; its full sequence is Trigger factor (431 aa).

The region spanning 158–243 (GYLVALETWS…VIEVSEPVLL (86 aa)) is the PPIase FKBP-type domain.

Belongs to the FKBP-type PPIase family. Tig subfamily.

It localises to the cytoplasm. The enzyme catalyses [protein]-peptidylproline (omega=180) = [protein]-peptidylproline (omega=0). Involved in protein export. Acts as a chaperone by maintaining the newly synthesized protein in an open conformation. Functions as a peptidyl-prolyl cis-trans isomerase. This is Trigger factor from Xylella fastidiosa (strain M23).